A 156-amino-acid polypeptide reads, in one-letter code: MSSNKINKKSIARIAAIQAIYQHMLRNNDNIDDIIENVLSFYRNDTSMTDSPIKISLTISHFKMLVKLVFENIDKIDEIISNHLVNDKNQNHIPILLQALLRSGICELLFFPDIPTKVIINEYTDIANDMLNDHEIGFVNSILDKIAHENKRFYDK.

It belongs to the NusB family.

Functionally, involved in transcription antitermination. Required for transcription of ribosomal RNA (rRNA) genes. Binds specifically to the boxA antiterminator sequence of the ribosomal RNA (rrn) operons. This is Transcription antitermination protein NusB from Rickettsia bellii (strain OSU 85-389).